The sequence spans 315 residues: Protein sprouty homolog 2 (315 aa).

Positions 1-14 (MEARAQSGSGSQPL) are enriched in polar residues. Disordered stretches follow at residues 1 to 38 (MEARAQSGSGSQPLLQAPRDSGRQRGEPDPRDALPQQV) and 51 to 140 (NTNE…GSSF). Residues 20–32 (DSGRQRGEPDPRD) show a composition bias toward basic and acidic residues. A compositionally biased stretch (pro residues) spans 88 to 100 (PRQPSRPQHPPAH). The segment covering 109-140 (RSISTVSSGSRSSTRTSTSSSSSEQRLLGSSF) has biased composition (low complexity). Positions 118-315 (SRSSTRTSTS…VPPRNFEKPT (198 aa)) are required for interaction with CAV1. The SPR domain maps to 177 to 291 (KCEDCGKCKC…CYDRVNRPGC (115 aa)). The segment at 178 to 315 (CEDCGKCKCK…VPPRNFEKPT (138 aa)) is required for interaction with TESK1.

It belongs to the sprouty family. As to quaternary structure, forms heterodimers with SPRY1. Forms a tripartite complex containing GAB1, METTL13 and SPRY2. Within the complex interacts with METTL13. Interacts with RAF1. Interacts (via C-terminus) with TESK1 (via C-terminus); the interaction disrupts SPRY2 interaction with GRB2, potentially via disruption of SPRY2 serine dephosphorylation. Interacts with PPP2R1A/PP2A-A and PPP2CA/PP2A-C; the interaction with PPP2CA/PP2A-C is inhibited by interaction with TESK1, possibly by vesicular sequestration of SPRY2. Inhibition of the interaction with the serine/threonine-protein phosphatase 2A (PP2A) holoenzyme results in loss of PP2A-mediated dephosphorylation, resulting in the loss of SPRY2 interaction with GRB2. Interacts with GRB2. Interacts with CBL/C-CBL; the interaction inhibits CBL-mediated ubiquitination of EGFR. Interacts (via C-terminus) with CAV1 (via C-terminus). Cleaved at Pro-144 by the prolyl endopeptidase FAP (seprase) activity (in vitro).

The protein localises to the cytoplasm. The protein resides in the cytoskeleton. Its subcellular location is the cell projection. It is found in the ruffle membrane. Functionally, antagonist of fibroblast growth factor (FGF) pathways via inhibition of FGF-mediated phosphorylation of ERK1/2. Thereby acts as an antagonist of FGF-induced retinal lens fiber differentiation, may inhibit limb bud outgrowth and may negatively modulate respiratory organogenesis. Inhibits TGFB-induced epithelial-to-mesenchymal transition in retinal lens epithelial cells. Inhibits CBL/C-CBL-mediated EGFR ubiquitination. The sequence is that of Protein sprouty homolog 2 (SPRY2) from Bos taurus (Bovine).